Here is a 276-residue protein sequence, read N- to C-terminus: NADPH-dependent 7-cyano-7-deazaguanine reductase (276 aa).

83 to 85 is a substrate binding site; sequence VES. Residue 85-86 participates in NADPH binding; it reads SK. The active-site Thioimide intermediate is the Cys-184. The Proton donor role is filled by Asp-191. 223 to 224 is a substrate binding site; it reads HE. 252–253 lines the NADPH pocket; sequence RG.

The protein belongs to the GTP cyclohydrolase I family. QueF type 2 subfamily. Homodimer.

The protein localises to the cytoplasm. The enzyme catalyses 7-aminomethyl-7-carbaguanine + 2 NADP(+) = 7-cyano-7-deazaguanine + 2 NADPH + 3 H(+). The protein operates within tRNA modification; tRNA-queuosine biosynthesis. Catalyzes the NADPH-dependent reduction of 7-cyano-7-deazaguanine (preQ0) to 7-aminomethyl-7-deazaguanine (preQ1). The protein is NADPH-dependent 7-cyano-7-deazaguanine reductase of Azotobacter vinelandii (strain DJ / ATCC BAA-1303).